The primary structure comprises 117 residues: Small ribosomal subunit protein eS25 (117 aa).

A disordered region spans residues 1 to 38 (MPPKKDAKSSAKQPQKTQKKKEGSGGGKAKKKKWSKGK). Residues 28 to 37 (KAKKKKWSKG) show a composition bias toward basic residues.

This sequence belongs to the eukaryotic ribosomal protein eS25 family.

The chain is Small ribosomal subunit protein eS25 (RpS25) from Drosophila melanogaster (Fruit fly).